Reading from the N-terminus, the 230-residue chain is 3-beta-hydroxysteroid-Delta(8),Delta(7)-isomerase (230 aa).

Residue threonine 2 is modified to N-acetylthreonine. 4 helical membrane passes run 29–49 (WHIL…TWLL), 66–86 (LCWF…FVLY), 121–141 (METI…IAFL), and 185–205 (FWFY…VLVL). In terms of domain architecture, EXPERA spans 61 to 204 (WRRLSLCWFA…LWLVLPGVLV (144 aa)).

It belongs to the EBP family.

Its subcellular location is the endoplasmic reticulum membrane. It localises to the nucleus envelope. It is found in the cytoplasmic vesicle. It catalyses the reaction lathosterol = 5alpha-cholest-8-en-3beta-ol. It carries out the reaction zymosterol = 5alpha-cholesta-7,24-dien-3beta-ol. The catalysed reaction is 5,6alpha-epoxy-5alpha-cholestan-3beta-ol + H2O = 5alpha-cholestane-3beta,5,6beta-triol. The enzyme catalyses 5,6beta-epoxy-5beta-cholestan-3beta-ol + H2O = 5alpha-cholestane-3beta,5,6beta-triol. The protein operates within steroid biosynthesis; cholesterol biosynthesis. Its activity is regulated as follows. Cholestenol Delta-isomerase and cholesterol-5,6-epoxide hydrolase (ChEH) activities are inhibited by tamoxifen and the selective AEBS ligand (4-benzyl-phenoxy)-ethyl-N-pyrrolidine (PBPE). ChEH activity is inhibited by oleic acid. Functionally, isomerase that catalyzes the conversion of Delta(8)-sterols to their corresponding Delta(7)-isomers a catalytic step in the postlanosterol biosynthesis of cholesterol. In terms of biological role, component of the microsomal antiestrogen binding site (AEBS), a multiproteic complex at the ER membrane that consists of an association between EBP and 7-dehydrocholesterol reductase/DHCR7. This complex is responsible for cholesterol-5,6-epoxide hydrolase (ChEH) activity, which consists in the hydration of cholesterol-5,6-epoxides (5,6-EC) into cholestane-3beta,5alpha,6beta-triol (CT). The precise role of each component of this complex has not been described yet. The sequence is that of 3-beta-hydroxysteroid-Delta(8),Delta(7)-isomerase from Homo sapiens (Human).